A 98-amino-acid polypeptide reads, in one-letter code: Cell cycle protein GpsB (98 aa).

Positions 34–72 (LDMVIKDYEAFHQEIEELQQENLQLKKQLEEANKRQPAQ) form a coiled coil.

It belongs to the GpsB family. In terms of assembly, forms polymers through the coiled coil domains. Interacts with PBP1, MreC and EzrA.

The protein resides in the cytoplasm. Divisome component that associates with the complex late in its assembly, after the Z-ring is formed, and is dependent on DivIC and PBP2B for its recruitment to the divisome. Together with EzrA, is a key component of the system that regulates PBP1 localization during cell cycle progression. Its main role could be the removal of PBP1 from the cell pole after pole maturation is completed. Also contributes to the recruitment of PBP1 to the division complex. Not essential for septum formation. The protein is Cell cycle protein GpsB of Bacillus licheniformis (strain ATCC 14580 / DSM 13 / JCM 2505 / CCUG 7422 / NBRC 12200 / NCIMB 9375 / NCTC 10341 / NRRL NRS-1264 / Gibson 46).